A 299-amino-acid polypeptide reads, in one-letter code: Tyrosine recombinase XerC (299 aa).

The region spanning Met-1–Leu-85 is the Core-binding (CB) domain. The Tyr recombinase domain maps to Arg-106–Asp-285. Active-site residues include Arg-146, Lys-170, His-237, Arg-240, and His-263. Residue Tyr-272 is the O-(3'-phospho-DNA)-tyrosine intermediate of the active site.

It belongs to the 'phage' integrase family. XerC subfamily. In terms of assembly, forms a cyclic heterotetrameric complex composed of two molecules of XerC and two molecules of XerD.

Its subcellular location is the cytoplasm. Its function is as follows. Site-specific tyrosine recombinase, which acts by catalyzing the cutting and rejoining of the recombining DNA molecules. The XerC-XerD complex is essential to convert dimers of the bacterial chromosome into monomers to permit their segregation at cell division. It also contributes to the segregational stability of plasmids. This Azotobacter vinelandii (strain DJ / ATCC BAA-1303) protein is Tyrosine recombinase XerC.